The chain runs to 98 residues: NADH-ubiquinone oxidoreductase chain 4L (98 aa).

The next 3 helical transmembrane spans lie at 1 to 21 (MTLI…GLLM), 29 to 49 (ALLC…LTIL), and 61 to 81 (IILL…LVMV).

It belongs to the complex I subunit 4L family. Core subunit of respiratory chain NADH dehydrogenase (Complex I) which is composed of 45 different subunits.

Its subcellular location is the mitochondrion inner membrane. The catalysed reaction is a ubiquinone + NADH + 5 H(+)(in) = a ubiquinol + NAD(+) + 4 H(+)(out). Functionally, core subunit of the mitochondrial membrane respiratory chain NADH dehydrogenase (Complex I) which catalyzes electron transfer from NADH through the respiratory chain, using ubiquinone as an electron acceptor. Part of the enzyme membrane arm which is embedded in the lipid bilayer and involved in proton translocation. This chain is NADH-ubiquinone oxidoreductase chain 4L (MT-ND4L), found in Megaptera novaeangliae (Humpback whale).